The sequence spans 227 residues: Uracil-DNA glycosylase (227 aa).

The active-site Proton acceptor is Asp-64.

This sequence belongs to the uracil-DNA glycosylase (UDG) superfamily. UNG family.

The protein resides in the cytoplasm. The catalysed reaction is Hydrolyzes single-stranded DNA or mismatched double-stranded DNA and polynucleotides, releasing free uracil.. Excises uracil residues from the DNA which can arise as a result of misincorporation of dUMP residues by DNA polymerase or due to deamination of cytosine. This Sodalis glossinidius (strain morsitans) protein is Uracil-DNA glycosylase.